The chain runs to 519 residues: Threonine synthase, chloroplastic (519 aa).

Residues 1–40 (MAASCMLRSSFISPGLPQLHHQSTSKPNNGIHFFTPIKAT) constitute a chloroplast transit peptide. Lys196 carries the post-translational modification N6-(pyridoxal phosphate)lysine. Pyridoxal 5'-phosphate contacts are provided by residues 328–332 (GNLGN) and Thr465.

It belongs to the threonine synthase family. As to quaternary structure, homodimer. Pyridoxal 5'-phosphate is required as a cofactor.

The protein resides in the plastid. Its subcellular location is the chloroplast. The catalysed reaction is O-phospho-L-homoserine + H2O = L-threonine + phosphate. It functions in the pathway amino-acid biosynthesis; L-threonine biosynthesis; L-threonine from L-aspartate: step 5/5. Its activity is regulated as follows. Allosterically activated by S-adenosyl-methionine (SAM). Functionally, catalyzes the gamma-elimination of phosphate from L-phosphohomoserine and the beta-addition of water to produce L-threonine. This chain is Threonine synthase, chloroplastic, found in Solanum tuberosum (Potato).